The chain runs to 322 residues: Lipoyl synthase (322 aa).

[4Fe-4S] cluster-binding residues include C68, C73, C79, C94, C98, C101, and S309. Residues F80–S298 enclose the Radical SAM core domain.

Belongs to the radical SAM superfamily. Lipoyl synthase family. Requires [4Fe-4S] cluster as cofactor.

It localises to the cytoplasm. The catalysed reaction is [[Fe-S] cluster scaffold protein carrying a second [4Fe-4S](2+) cluster] + N(6)-octanoyl-L-lysyl-[protein] + 2 oxidized [2Fe-2S]-[ferredoxin] + 2 S-adenosyl-L-methionine + 4 H(+) = [[Fe-S] cluster scaffold protein] + N(6)-[(R)-dihydrolipoyl]-L-lysyl-[protein] + 4 Fe(3+) + 2 hydrogen sulfide + 2 5'-deoxyadenosine + 2 L-methionine + 2 reduced [2Fe-2S]-[ferredoxin]. Its pathway is protein modification; protein lipoylation via endogenous pathway; protein N(6)-(lipoyl)lysine from octanoyl-[acyl-carrier-protein]: step 2/2. In terms of biological role, catalyzes the radical-mediated insertion of two sulfur atoms into the C-6 and C-8 positions of the octanoyl moiety bound to the lipoyl domains of lipoate-dependent enzymes, thereby converting the octanoylated domains into lipoylated derivatives. This chain is Lipoyl synthase, found in Idiomarina loihiensis (strain ATCC BAA-735 / DSM 15497 / L2-TR).